A 322-amino-acid polypeptide reads, in one-letter code: Ribonucleoside-diphosphate reductase small subunit (322 aa).

Positions 70, 101, and 104 each coordinate Fe cation. The active site involves Tyr-108. Residues Glu-163, Glu-197, and His-200 each contribute to the Fe cation site.

This sequence belongs to the ribonucleoside diphosphate reductase small chain family. In terms of assembly, heterodimer of a large and a small subunit. Fe cation serves as cofactor.

It carries out the reaction a 2'-deoxyribonucleoside 5'-diphosphate + [thioredoxin]-disulfide + H2O = a ribonucleoside 5'-diphosphate + [thioredoxin]-dithiol. Its function is as follows. Provides the precursors necessary for DNA synthesis. Catalyzes the biosynthesis of deoxyribonucleotides from the corresponding ribonucleotides. The chain is Ribonucleoside-diphosphate reductase small subunit (RNR2) from Plasmodium falciparum (isolate FCR-3 / Gambia).